The sequence spans 463 residues: Fumarate hydratase class II (463 aa).

Substrate contacts are provided by residues 97-99 (SGT), R125, 128-131 (HPND), 138-140 (SSN), and T186. The span at 121–134 (RGEGRKVHPNDHVN) shows a compositional bias: basic and acidic residues. The segment at 121-142 (RGEGRKVHPNDHVNRGQSSNDT) is disordered. The active-site Proton donor/acceptor is the H187. Residue S317 is part of the active site. Residues S318 and 323–325 (KVN) contribute to the substrate site.

The protein belongs to the class-II fumarase/aspartase family. Fumarase subfamily. As to quaternary structure, homotetramer.

It localises to the cytoplasm. The catalysed reaction is (S)-malate = fumarate + H2O. The protein operates within carbohydrate metabolism; tricarboxylic acid cycle; (S)-malate from fumarate: step 1/1. Its function is as follows. Involved in the TCA cycle. Catalyzes the stereospecific interconversion of fumarate to L-malate. In Bordetella bronchiseptica (strain ATCC BAA-588 / NCTC 13252 / RB50) (Alcaligenes bronchisepticus), this protein is Fumarate hydratase class II.